The chain runs to 680 residues: Probable potassium transport system protein Kup (680 aa).

Helical transmembrane passes span 16-36 (IAGM…SPLY), 60-80 (ISLV…LIAL), 103-123 (WLVI…MLTP), 150-170 (EVII…KFGT), 177-197 (FGPI…MNLM), 222-242 (VGIL…ALYS), 255-275 (SWPY…VWLL), 302-322 (IPAI…LISG), 351-371 (LYIS…VFYF), 380-400 (AYGL…FHYL), 407-427 (WFLA…FFIA), and 432-452 (FMHG…IMFV).

This sequence belongs to the HAK/KUP transporter (TC 2.A.72) family.

It localises to the cell membrane. The enzyme catalyses K(+)(in) + H(+)(in) = K(+)(out) + H(+)(out). Transport of potassium into the cell. Likely operates as a K(+):H(+) symporter. The polypeptide is Probable potassium transport system protein Kup (Latilactobacillus sakei subsp. sakei (strain 23K) (Lactobacillus sakei subsp. sakei)).